Consider the following 635-residue polypeptide: Glutamine--fructose-6-phosphate aminotransferase [isomerizing] (635 aa).

Residue cysteine 2 is the Nucleophile; for GATase activity of the active site. In terms of domain architecture, Glutamine amidotransferase type-2 spans 2–218 (CGIVGMVAGR…EGDIADVHRD (217 aa)). SIS domains lie at 299–439 (FERL…AKKI) and 472–625 (CARH…IDQP). Lysine 630 serves as the catalytic For Fru-6P isomerization activity.

As to quaternary structure, homodimer.

Its subcellular location is the cytoplasm. The enzyme catalyses D-fructose 6-phosphate + L-glutamine = D-glucosamine 6-phosphate + L-glutamate. Functionally, catalyzes the first step in hexosamine metabolism, converting fructose-6P into glucosamine-6P using glutamine as a nitrogen source. The chain is Glutamine--fructose-6-phosphate aminotransferase [isomerizing] from Treponema pallidum (strain Nichols).